The primary structure comprises 41 residues: Inducible serine protease inhibitor 3 (41 aa).

Its function is as follows. Inhibits trypsin and the toxin proteases PR1 and PR2 of M.anisopliae. Does not inhibit chymotrypsin, subtilisin Carlsberg, proteinase K and porcine pancreatic elastase. This chain is Inducible serine protease inhibitor 3, found in Galleria mellonella (Greater wax moth).